The sequence spans 361 residues: Chitinase-3-like protein 1 (361 aa).

Residues 1–361 (YKLICYYTSW…SAVKDVLAEV (361 aa)) enclose the GH18 domain. A disulfide bond links Cys5 and Cys30. Asn39 carries N-linked (GlcNAc...) asparagine glycosylation. Residues 49-50 (EW), 76-79 (GGWN), Tyr120, 183-186 (LTYD), and Arg241 each bind chitin. Cys278 and Cys342 are oxidised to a cystine. Positions 302–316 (QWVAYDDQESVKNKA) are important for AKT1 activation and IL8 production. Trp330 is a chitin binding site. Residue Asn345 is glycosylated (N-linked (GlcNAc...) asparagine).

It belongs to the glycosyl hydrolase 18 family. As to quaternary structure, monomer. Detected in mammary gland.

It localises to the secreted. Its subcellular location is the extracellular space. The protein resides in the cytoplasm. The protein localises to the perinuclear region. It is found in the endoplasmic reticulum. In terms of biological role, carbohydrate-binding lectin with a preference for chitin. Has no chitinase activity. May play a role in tissue remodeling and in the capacity of cells to respond to and cope with changes in their environment. Plays a role in T-helper cell type 2 (Th2) inflammatory response and IL-13-induced inflammation, regulating allergen sensitization, inflammatory cell apoptosis, dendritic cell accumulation and M2 macrophage differentiation. Facilitates invasion of pathogenic enteric bacteria into colonic mucosa and lymphoid organs. Mediates activation of AKT1 signaling pathway and subsequent IL8 production in colonic epithelial cells. Regulates antibacterial responses in lung by contributing to macrophage bacterial killing, controlling bacterial dissemination and augmenting host tolerance. Also regulates hyperoxia-induced injury, inflammation and epithelial apoptosis in lung. The polypeptide is Chitinase-3-like protein 1 (CHI3L1) (Ovis aries (Sheep)).